The primary structure comprises 302 residues: MTVAKLSINLSGLEFENPLILASGINDKVPEQWIRAHEEGAGGVVTKSIGIEPRKGYDNPTIVELPYGLINAMGLPNPGWKGFLEMVEGYSFDFPLIVSIFGGTPEEFAFLAEKLSEVADAFELNLSCPHAKGYGMEIGQKPENVYAVVKAVKDATDKPVIAKLTPNIDDITKLGLAAENAGADAVSAINTLKAIAIDIYARKPILSNKVGGYSGPGVKPVALRAVYDLARTLDIPVIGIGGITTWQDAVEFLLAGASALQIGTAVSLRGWKVFREINEGIERYLREEGFSSVEEIVGLALE.

FMN contacts are provided by residues Ser-23 and 47-48; that span reads KS. Substrate-binding positions include Lys-47, 71–75, and Asn-125; that span reads NAMGL. Asn-125 is an FMN binding site. The Nucleophile role is filled by Cys-128. The FMN site is built by Lys-163 and Ile-189. A substrate-binding site is contributed by 190–191; that stretch reads NT. Residues Gly-215, 241–242, and 263–264 contribute to the FMN site; these read GG and GT.

The protein belongs to the dihydroorotate dehydrogenase family. Type 1 subfamily. As to quaternary structure, heterotetramer of 2 PyrK and 2 PyrD type B subunits. It depends on FMN as a cofactor.

Its subcellular location is the cytoplasm. The enzyme catalyses (S)-dihydroorotate + NAD(+) = orotate + NADH + H(+). It participates in pyrimidine metabolism; UMP biosynthesis via de novo pathway; orotate from (S)-dihydroorotate (NAD(+) route): step 1/1. Catalyzes the conversion of dihydroorotate to orotate with NAD(+) as electron acceptor. This chain is Dihydroorotate dehydrogenase B (NAD(+)), catalytic subunit (pyrD), found in Thermococcus kodakarensis (strain ATCC BAA-918 / JCM 12380 / KOD1) (Pyrococcus kodakaraensis (strain KOD1)).